A 336-amino-acid polypeptide reads, in one-letter code: F420-dependent glucose-6-phosphate dehydrogenase (336 aa).

D39 provides a ligand contact to coenzyme F420-(gamma-Glu)n. H40 serves as the catalytic Proton donor. Coenzyme F420-(gamma-Glu)n is bound by residues T76 and S107 to G108. E109 (proton acceptor) is an active-site residue. Residues N112, G177–G178, and V180–V181 contribute to the coenzyme F420-(gamma-Glu)n site. Residues T195, K198, K259, and R283 each coordinate substrate.

It belongs to the F420-dependent glucose-6-phosphate dehydrogenase family. As to quaternary structure, homodimer.

The catalysed reaction is oxidized coenzyme F420-(gamma-L-Glu)(n) + D-glucose 6-phosphate + H(+) = 6-phospho-D-glucono-1,5-lactone + reduced coenzyme F420-(gamma-L-Glu)(n). Its function is as follows. Catalyzes the coenzyme F420-dependent oxidation of glucose 6-phosphate (G6P) to 6-phosphogluconolactone. The sequence is that of F420-dependent glucose-6-phosphate dehydrogenase from Tsukamurella paurometabola (strain ATCC 8368 / DSM 20162 / CCUG 35730 / CIP 100753 / JCM 10117 / KCTC 9821 / NBRC 16120 / NCIMB 702349 / NCTC 13040) (Corynebacterium paurometabolum).